A 496-amino-acid polypeptide reads, in one-letter code: MFFRPDFRPRCAKWLIATGLFLMLGACVEKPTTLERVKEDGVLRMITRNSPATYFQDRNGETGFEYELVKRFADDLGVELKIETADNLDDLFDQMNKPGGPVLGAAGLIETPKRKQQARFSHSYLEVTPQVVYRNGQSRPTDPGDLVGKRIVVLKGSAHAEQLAALKAQNPGLEYEESDAVEVVDLLRMVDEGQIDLTLVDSNELAMNQVYFPNVRVAFDLGEAREQRWVVAPGEDNSLLNEINAYLDKVEKNGTLQRLKDRYYGHVDVLGYVGAYTFAQHLQERLPKYEKHFQTSAKKEQVDWRLLAAIGYQESMWQPAVTSKTGVRGLMMLTQNTAQAMGVTNRLDARQSIQGGAKYFAYVKDQLDDSIKEPDRTWLALASYNIGSGHLEDARKLAQNEGLNPDKWLDVKKMLPRLAQKKWYSKTRYGYARGGEPVHFVANIRRYYDILTWVTQPQLEGSQVADGNLHVPGVDKTQPPAPPAPASGSSPDKPAL.

The N-terminal stretch at 1 to 29 (MFFRPDFRPRCAKWLIATGLFLMLGACVE) is a signal peptide. The tract at residues 30–267 (KPTTLERVKE…RLKDRYYGHV (238 aa)) is non-LT domain. The segment at 268–496 (DVLGYVGAYT…SGSSPDKPAL (229 aa)) is LT domain. Glu314 is a catalytic residue. A disordered region spans residues 464-496 (VADGNLHVPGVDKTQPPAPPAPASGSSPDKPAL). The span at 486-496 (ASGSSPDKPAL) shows a compositional bias: low complexity.

In the N-terminal section; belongs to the bacterial solute-binding protein 3 family. This sequence in the C-terminal section; belongs to the transglycosylase Slt family.

It is found in the cell outer membrane. The catalysed reaction is Exolytic cleavage of the (1-&gt;4)-beta-glycosidic linkage between N-acetylmuramic acid (MurNAc) and N-acetylglucosamine (GlcNAc) residues in peptidoglycan, from either the reducing or the non-reducing ends of the peptidoglycan chains, with concomitant formation of a 1,6-anhydrobond in the MurNAc residue.. In terms of biological role, murein-degrading enzyme that degrades murein glycan strands and insoluble, high-molecular weight murein sacculi, with the concomitant formation of a 1,6-anhydromuramoyl product. Lytic transglycosylases (LTs) play an integral role in the metabolism of the peptidoglycan (PG) sacculus. Their lytic action creates space within the PG sacculus to allow for its expansion as well as for the insertion of various structures such as secretion systems and flagella. The polypeptide is Membrane-bound lytic murein transglycosylase F (Pseudomonas savastanoi pv. phaseolicola (strain 1448A / Race 6) (Pseudomonas syringae pv. phaseolicola (strain 1448A / Race 6))).